The primary structure comprises 297 residues: Acetaldehyde dehydrogenase (297 aa).

Position 15–18 (15–18) interacts with NAD(+); that stretch reads SGSI. Cys130 serves as the catalytic Acyl-thioester intermediate. NAD(+) contacts are provided by residues 162-170 and Asn272; that span reads SAGIATREN.

This sequence belongs to the acetaldehyde dehydrogenase family.

It catalyses the reaction acetaldehyde + NAD(+) + CoA = acetyl-CoA + NADH + H(+). This Burkholderia pseudomallei (strain K96243) protein is Acetaldehyde dehydrogenase (mhpF).